We begin with the raw amino-acid sequence, 374 residues long: Low-specificity L-threonine aldolase (374 aa).

N6-(pyridoxal phosphate)lysine is present on Lys213. The disordered stretch occupies residues 354 to 374; that stretch reads HPHKDDGRNNKKMYSLDAIKK.

This sequence belongs to the threonine aldolase family. As to quaternary structure, homotetramer. The cofactor is pyridoxal 5'-phosphate.

It carries out the reaction L-threonine = acetaldehyde + glycine. The enzyme catalyses L-allo-threonine = acetaldehyde + glycine. The protein operates within amino-acid degradation; L-threonine degradation via aldolase pathway; acetaldehyde and glycine from L-threonine: step 1/1. In Candida albicans (Yeast), this protein is Low-specificity L-threonine aldolase (GLY1).